The primary structure comprises 310 residues: MNPKRSFQALILTLHNYWADKGCAVLQPYDMEVGAGTFHPATTLRALGPKPWKAAYVQPSRRPSDGRYGENPNRLQHYYQYQVILKPNPSNLQELYLGSLKAIGLDPLLHDVRFVEDDWESPTLGAWGLGWECWCDGMEVSQFTYFQQVCGIECSPVAGELTYGLERLAMYVQGVDNVYDLNFNGREGEEKISYGDVFLQAEQEYSRHNFEFADTSMLHRHFIDAEKECLALLAAGAPGDNDNQRLHKCVFPAYDQCIKASHIFNLLNARGVISVTERERYIARVRDLAKACGEAFLLTDAGGLNWNRAA.

It belongs to the class-II aminoacyl-tRNA synthetase family. As to quaternary structure, tetramer of two alpha and two beta subunits.

The protein localises to the cytoplasm. The enzyme catalyses tRNA(Gly) + glycine + ATP = glycyl-tRNA(Gly) + AMP + diphosphate. This is Glycine--tRNA ligase alpha subunit from Agrobacterium fabrum (strain C58 / ATCC 33970) (Agrobacterium tumefaciens (strain C58)).